A 324-amino-acid chain; its full sequence is Adenine deaminase (324 aa).

The Zn(2+) site is built by His-11, His-13, and His-189. The active-site Proton donor is Glu-192. Asp-270 provides a ligand contact to Zn(2+). Position 271 (Asp-271) interacts with substrate.

It belongs to the metallo-dependent hydrolases superfamily. Adenosine and AMP deaminases family. Adenine deaminase type 2 subfamily. It depends on Zn(2+) as a cofactor.

The enzyme catalyses adenine + H2O + H(+) = hypoxanthine + NH4(+). In terms of biological role, catalyzes the hydrolytic deamination of adenine to hypoxanthine. Plays an important role in the purine salvage pathway and in nitrogen catabolism. The protein is Adenine deaminase of Rhizobium meliloti (strain 1021) (Ensifer meliloti).